Consider the following 556-residue polypeptide: Dihydroxy-acid dehydratase (556 aa).

D78 contacts Mg(2+). C119 provides a ligand contact to [2Fe-2S] cluster. Residues D120 and K121 each contribute to the Mg(2+) site. Position 121 is an N6-carboxylysine (K121). C191 is a binding site for [2Fe-2S] cluster. E442 lines the Mg(2+) pocket. The active-site Proton acceptor is the S468.

This sequence belongs to the IlvD/Edd family. Homodimer. [2Fe-2S] cluster is required as a cofactor. Mg(2+) serves as cofactor.

It carries out the reaction (2R)-2,3-dihydroxy-3-methylbutanoate = 3-methyl-2-oxobutanoate + H2O. It catalyses the reaction (2R,3R)-2,3-dihydroxy-3-methylpentanoate = (S)-3-methyl-2-oxopentanoate + H2O. The protein operates within amino-acid biosynthesis; L-isoleucine biosynthesis; L-isoleucine from 2-oxobutanoate: step 3/4. Its pathway is amino-acid biosynthesis; L-valine biosynthesis; L-valine from pyruvate: step 3/4. Its function is as follows. Functions in the biosynthesis of branched-chain amino acids. Catalyzes the dehydration of (2R,3R)-2,3-dihydroxy-3-methylpentanoate (2,3-dihydroxy-3-methylvalerate) into 2-oxo-3-methylpentanoate (2-oxo-3-methylvalerate) and of (2R)-2,3-dihydroxy-3-methylbutanoate (2,3-dihydroxyisovalerate) into 2-oxo-3-methylbutanoate (2-oxoisovalerate), the penultimate precursor to L-isoleucine and L-valine, respectively. The polypeptide is Dihydroxy-acid dehydratase (Clostridium beijerinckii (strain ATCC 51743 / NCIMB 8052) (Clostridium acetobutylicum)).